The following is a 244-amino-acid chain: Lactate utilization protein A (244 aa).

It belongs to the LutA/YkgE family.

Is involved in L-lactate degradation and allows cells to grow with lactate as the sole carbon source. The protein is Lactate utilization protein A of Oceanobacillus iheyensis (strain DSM 14371 / CIP 107618 / JCM 11309 / KCTC 3954 / HTE831).